A 28-amino-acid chain; its full sequence is Humanin-like 2 (28 aa).

Belongs to the humanin family. Highly expressed in testis. Also expressed in kidney, heart, skeletal muscles and brain.

It is found in the secreted. It localises to the cytoplasm. In terms of biological role, plays a role as a neuroprotective and antiapoptotic factor. This is Humanin-like 2 from Homo sapiens (Human).